A 494-amino-acid chain; its full sequence is Ceramide glucosyltransferase (494 aa).

The Lumenal segment spans residues 1–6; the sequence is MPLLMD. A helical transmembrane segment spans residues 7–27; that stretch reads GLAYAGAIWSLIVFCVQAIGL. Residues 28–337 are Cytoplasmic-facing; that stretch reads YQLFRSYSRP…VRWLRVRKWT (310 aa). A short sequence motif (D1) is located at residue Asp-95. A short sequence motif (D2) is located at residue Asp-160. Position 285 (Asp-285) is a short sequence motif, D3. Asp-285 functions as the Proton acceptor in the catalytic mechanism. The (Q/R)XXRW motif lies at 326–330; sequence RRVRW. A helical transmembrane segment spans residues 338–358; the sequence is VLLATLVEPGVESMVCCMAFA. The Lumenal portion of the chain corresponds to 359–380; it reads HALTTTPWCPNPADWPIPHTWT. The chain crosses the membrane as a helical span at residues 381 to 401; it reads ALWSIWLAAIAVWATLDYVVY. The Cytoplasmic portion of the chain corresponds to 402-428; the sequence is HFLHSCRSIEKDADSPDFAQGNELMKR. The helical transmembrane segment at 429–449 threads the bilayer; that stretch reads PFGAWILAWIGREILALPIWT. Residues 450 to 494 are Lumenal-facing; sequence RAVLLGTTVTWRGTKFKVRPDQSVVDIPNAGAKSNGIGSTNRKVR.

It belongs to the glycosyltransferase 2 family.

The protein localises to the golgi apparatus membrane. It carries out the reaction an N-acylsphing-4-enine + UDP-alpha-D-glucose = a beta-D-glucosyl-(1&lt;-&gt;1')-N-acylsphing-4-enine + UDP + H(+). The protein operates within lipid metabolism; sphingolipid metabolism. Catalyzes the final step in the biosynthesis of the membrane lipid glucosylceramide (GluCer), the transfer of glucose to ceramide. Glucosylceramides play important roles in growth, differentiation and pathogenicity. In Pyricularia oryzae (strain 70-15 / ATCC MYA-4617 / FGSC 8958) (Rice blast fungus), this protein is Ceramide glucosyltransferase.